Here is a 1087-residue protein sequence, read N- to C-terminus: Exportin-7-A (1087 aa).

One can recognise an Importin N-terminal domain in the interval 30-96 (AEKALVEFTN…RNYVLTYLAT (67 aa)).

Belongs to the exportin family. As to expression, expressed in oocytes (at protein level).

The protein localises to the cytoplasm. It localises to the nucleus. In terms of biological role, mediates the nuclear export of proteins (cargos) with broad substrate specificity. The protein is Exportin-7-A (xpo7-a) of Xenopus laevis (African clawed frog).